Reading from the N-terminus, the 491-residue chain is Aspartyl/glutamyl-tRNA(Asn/Gln) amidotransferase subunit B (491 aa).

Belongs to the GatB/GatE family. GatB subfamily. Heterotrimer of A, B and C subunits.

It carries out the reaction L-glutamyl-tRNA(Gln) + L-glutamine + ATP + H2O = L-glutaminyl-tRNA(Gln) + L-glutamate + ADP + phosphate + H(+). The catalysed reaction is L-aspartyl-tRNA(Asn) + L-glutamine + ATP + H2O = L-asparaginyl-tRNA(Asn) + L-glutamate + ADP + phosphate + 2 H(+). Its function is as follows. Allows the formation of correctly charged Asn-tRNA(Asn) or Gln-tRNA(Gln) through the transamidation of misacylated Asp-tRNA(Asn) or Glu-tRNA(Gln) in organisms which lack either or both of asparaginyl-tRNA or glutaminyl-tRNA synthetases. The reaction takes place in the presence of glutamine and ATP through an activated phospho-Asp-tRNA(Asn) or phospho-Glu-tRNA(Gln). This is Aspartyl/glutamyl-tRNA(Asn/Gln) amidotransferase subunit B from Prochlorococcus marinus (strain NATL2A).